A 301-amino-acid polypeptide reads, in one-letter code: Sulfate adenylyltransferase subunit 2 (301 aa).

Positions 279–301 (RQGRLIDHDQDGSMEKKKQEGYF) are disordered.

It belongs to the PAPS reductase family. CysD subfamily. Heterodimer composed of CysD, the smaller subunit, and CysN.

It carries out the reaction sulfate + ATP + H(+) = adenosine 5'-phosphosulfate + diphosphate. It participates in sulfur metabolism; hydrogen sulfide biosynthesis; sulfite from sulfate: step 1/3. In terms of biological role, with CysN forms the ATP sulfurylase (ATPS) that catalyzes the adenylation of sulfate producing adenosine 5'-phosphosulfate (APS) and diphosphate, the first enzymatic step in sulfur assimilation pathway. APS synthesis involves the formation of a high-energy phosphoric-sulfuric acid anhydride bond driven by GTP hydrolysis by CysN coupled to ATP hydrolysis by CysD. The protein is Sulfate adenylyltransferase subunit 2 of Geotalea uraniireducens (strain Rf4) (Geobacter uraniireducens).